Here is a 102-residue protein sequence, read N- to C-terminus: Protamine-2 (102 aa).

A phosphoserine mark is found at serine 8, serine 10, and serine 37. Disordered regions lie at residues glutamate 15 to valine 41 and isoleucine 66 to histidine 102.

Belongs to the protamine P2 family. In terms of assembly, interacts with TDRP. In terms of processing, proteolytic processing into mature chains is required for histone eviction during spermatogenesis. Transition proteins (TNP1 and TNP2) are required for processing. Testis.

The protein resides in the nucleus. The protein localises to the chromosome. Its function is as follows. Protamines substitute for histones in the chromatin of sperm during the haploid phase of spermatogenesis. They compact sperm DNA into a highly condensed, stable and inactive complex. This is Protamine-2 (PRM2) from Pongo pygmaeus (Bornean orangutan).